The following is a 360-amino-acid chain: Photosystem II protein D1 3 (360 aa).

The next 3 helical transmembrane spans lie at 29–46 (YVGW…AATI), 118–133 (HFLI…EWEL), and 142–156 (WICV…AATA). Residue histidine 118 coordinates chlorophyll a. Residue tyrosine 126 coordinates pheophytin a. Aspartate 170 and glutamate 189 together coordinate [CaMn4O5] cluster. The chain crosses the membrane as a helical span at residues 197–218 (FHQLGVAGVFGGALFSAMHGSL). A chlorophyll a-binding site is contributed by histidine 198. A quinone-binding positions include histidine 215 and 264 to 265 (SF). Histidine 215 contacts Fe cation. Residue histidine 272 participates in Fe cation binding. A helical membrane pass occupies residues 274-288 (FLAAWPVIGIWFTAL). Residues histidine 332, glutamate 333, aspartate 342, and alanine 344 each contribute to the [CaMn4O5] cluster site. A propeptide spanning residues 345–360 (SAESAPVAMIAPSING) is cleaved from the precursor.

It belongs to the reaction center PufL/M/PsbA/D family. In terms of assembly, PSII is composed of 1 copy each of membrane proteins PsbA, PsbB, PsbC, PsbD, PsbE, PsbF, PsbH, PsbI, PsbJ, PsbK, PsbL, PsbM, PsbT, PsbX, PsbY, PsbZ, Psb30/Ycf12, peripheral proteins PsbO, CyanoQ (PsbQ), PsbU, PsbV and a large number of cofactors. It forms dimeric complexes. Precursor protein interacts with Ycf48. The D1/D2 heterodimer binds P680, chlorophylls that are the primary electron donor of PSII, and subsequent electron acceptors. It shares a non-heme iron and each subunit binds pheophytin, quinone, additional chlorophylls, carotenoids and lipids. D1 provides most of the ligands for the Mn4-Ca-O5 cluster of the oxygen-evolving complex (OEC). There is also a Cl(-1) ion associated with D1 and D2, which is required for oxygen evolution. The PSII complex binds additional chlorophylls, carotenoids and specific lipids. is required as a cofactor. Post-translationally, C-terminally processed by CtpA; processing is essential to allow assembly of the oxygen-evolving complex and thus photosynthetic growth. Tyr-161 forms a radical intermediate that is referred to as redox-active TyrZ, YZ or Y-Z.

It is found in the cellular thylakoid membrane. It carries out the reaction 2 a plastoquinone + 4 hnu + 2 H2O = 2 a plastoquinol + O2. Its function is as follows. Photosystem II (PSII) is a light-driven water:plastoquinone oxidoreductase that uses light energy to abstract electrons from H(2)O, generating O(2) and a proton gradient subsequently used for ATP formation. It consists of a core antenna complex that captures photons, and an electron transfer chain that converts photonic excitation into a charge separation. The D1/D2 (PsbA/PsbD) reaction center heterodimer binds P680, the primary electron donor of PSII as well as several subsequent electron acceptors. This is Photosystem II protein D1 3 from Thermosynechococcus vestitus (strain NIES-2133 / IAM M-273 / BP-1).